A 694-amino-acid chain; its full sequence is Elongation factor G (694 aa).

Positions Lys6–Thr288 constitute a tr-type G domain. GTP-binding positions include Ala15 to Thr22, Asp86 to His90, and Asn140 to Asp143.

It belongs to the TRAFAC class translation factor GTPase superfamily. Classic translation factor GTPase family. EF-G/EF-2 subfamily.

The protein localises to the cytoplasm. Its function is as follows. Catalyzes the GTP-dependent ribosomal translocation step during translation elongation. During this step, the ribosome changes from the pre-translocational (PRE) to the post-translocational (POST) state as the newly formed A-site-bound peptidyl-tRNA and P-site-bound deacylated tRNA move to the P and E sites, respectively. Catalyzes the coordinated movement of the two tRNA molecules, the mRNA and conformational changes in the ribosome. The protein is Elongation factor G of Legionella pneumophila (strain Lens).